Here is a 156-residue protein sequence, read N- to C-terminus: SsrA-binding protein (156 aa).

Belongs to the SmpB family.

It localises to the cytoplasm. Its function is as follows. Required for rescue of stalled ribosomes mediated by trans-translation. Binds to transfer-messenger RNA (tmRNA), required for stable association of tmRNA with ribosomes. tmRNA and SmpB together mimic tRNA shape, replacing the anticodon stem-loop with SmpB. tmRNA is encoded by the ssrA gene; the 2 termini fold to resemble tRNA(Ala) and it encodes a 'tag peptide', a short internal open reading frame. During trans-translation Ala-aminoacylated tmRNA acts like a tRNA, entering the A-site of stalled ribosomes, displacing the stalled mRNA. The ribosome then switches to translate the ORF on the tmRNA; the nascent peptide is terminated with the 'tag peptide' encoded by the tmRNA and targeted for degradation. The ribosome is freed to recommence translation, which seems to be the essential function of trans-translation. This Clostridium tetani (strain Massachusetts / E88) protein is SsrA-binding protein.